A 739-amino-acid polypeptide reads, in one-letter code: DEAD-box ATP-dependent RNA helicase 32 (739 aa).

Positions 71–99 (RKFAQLPISDKTKRGLKDAKYVDMTDVQS) match the Q motif motif. The Helicase ATP-binding domain occupies 102–277 (IPHALCGRDI…RLSLRDPEYI (176 aa)). 115 to 122 (ARTGSGKT) lines the ATP pocket. Positions 225–228 (DEAD) match the DEAD box motif. The Helicase C-terminal domain occupies 303–461 (KLDMLWSFIK…EVSRLLAALL (159 aa)). Residues 643–689 (GAEMRKADIEDKKVDKERRREKRMKQKIKRKRGAMEDEEEEEEEDHD) adopt a coiled-coil conformation. The interval 656 to 725 (VDKERRREKR…GGKINTDSLS (70 aa)) is disordered. Residues 661–674 (RREKRMKQKIKRKR) are compositionally biased toward basic residues. A compositionally biased stretch (acidic residues) spans 678–688 (EDEEEEEEEDH).

This sequence belongs to the DEAD box helicase family. DDX10/DBP4 subfamily.

It catalyses the reaction ATP + H2O = ADP + phosphate + H(+). This Arabidopsis thaliana (Mouse-ear cress) protein is DEAD-box ATP-dependent RNA helicase 32 (RH32).